The chain runs to 431 residues: 3-phosphoshikimate 1-carboxyvinyltransferase (431 aa).

Residues K26, S27, and R31 each contribute to the 3-phosphoshikimate site. K26 is a phosphoenolpyruvate binding site. 2 residues coordinate phosphoenolpyruvate: G100 and R129. Residues S175, S176, Q177, D308, and Q335 each coordinate 3-phosphoshikimate. Q177 serves as a coordination point for phosphoenolpyruvate. D308 functions as the Proton acceptor in the catalytic mechanism. Phosphoenolpyruvate contacts are provided by R339, R381, and K412.

This sequence belongs to the EPSP synthase family. As to quaternary structure, monomer.

It is found in the cytoplasm. It catalyses the reaction 3-phosphoshikimate + phosphoenolpyruvate = 5-O-(1-carboxyvinyl)-3-phosphoshikimate + phosphate. It functions in the pathway metabolic intermediate biosynthesis; chorismate biosynthesis; chorismate from D-erythrose 4-phosphate and phosphoenolpyruvate: step 6/7. Catalyzes the transfer of the enolpyruvyl moiety of phosphoenolpyruvate (PEP) to the 5-hydroxyl of shikimate-3-phosphate (S3P) to produce enolpyruvyl shikimate-3-phosphate and inorganic phosphate. The sequence is that of 3-phosphoshikimate 1-carboxyvinyltransferase from Opitutus terrae (strain DSM 11246 / JCM 15787 / PB90-1).